The primary structure comprises 101 residues: NAD(P)H-quinone oxidoreductase subunit 4L, chloroplastic (101 aa).

A run of 3 helical transmembrane segments spans residues 2 to 22 (MFEH…YGLI), 32 to 52 (ICLE…SDLF), and 61 to 81 (IFAI…LSIL).

This sequence belongs to the complex I subunit 4L family. As to quaternary structure, NDH is composed of at least 16 different subunits, 5 of which are encoded in the nucleus.

The protein resides in the plastid. The protein localises to the chloroplast thylakoid membrane. The catalysed reaction is a plastoquinone + NADH + (n+1) H(+)(in) = a plastoquinol + NAD(+) + n H(+)(out). It catalyses the reaction a plastoquinone + NADPH + (n+1) H(+)(in) = a plastoquinol + NADP(+) + n H(+)(out). Its function is as follows. NDH shuttles electrons from NAD(P)H:plastoquinone, via FMN and iron-sulfur (Fe-S) centers, to quinones in the photosynthetic chain and possibly in a chloroplast respiratory chain. The immediate electron acceptor for the enzyme in this species is believed to be plastoquinone. Couples the redox reaction to proton translocation, and thus conserves the redox energy in a proton gradient. The sequence is that of NAD(P)H-quinone oxidoreductase subunit 4L, chloroplastic from Oryza nivara (Indian wild rice).